Consider the following 321-residue polypeptide: Phospholipid phosphatase-related protein type 5 (321 aa).

6 helical membrane-spanning segments follow: residues 10 to 30, 62 to 82, 122 to 142, 196 to 213, 225 to 245, and 252 to 272; these read SSML…AYYF, AVPP…VIIV, FLGI…AGQV, AALS…ITNT, VLCL…VAEY, and VIAG…CVVN.

This sequence belongs to the PA-phosphatase related phosphoesterase family. As to expression, isoform 1 is expressed in brain, lung, kidney and colon. Isoform 2 is expressed in placenta, skeletal muscle and kidney.

The protein localises to the cell membrane. Functionally, induces filopodia formation and promotes neurite growth in a CDC42-independent manner; impedes neurite growth inhibitory-mediated axonal retraction. In Homo sapiens (Human), this protein is Phospholipid phosphatase-related protein type 5.